A 156-amino-acid chain; its full sequence is Small ribosomal subunit protein uS7 (156 aa).

This sequence belongs to the universal ribosomal protein uS7 family. Part of the 30S ribosomal subunit. Contacts proteins S9 and S11.

Functionally, one of the primary rRNA binding proteins, it binds directly to 16S rRNA where it nucleates assembly of the head domain of the 30S subunit. Is located at the subunit interface close to the decoding center, probably blocks exit of the E-site tRNA. This is Small ribosomal subunit protein uS7 from Leuconostoc citreum (strain KM20).